The primary structure comprises 341 residues: Phenylalanine--tRNA ligase alpha subunit (341 aa).

Residue Glu-254 participates in Mg(2+) binding.

Belongs to the class-II aminoacyl-tRNA synthetase family. Phe-tRNA synthetase alpha subunit type 1 subfamily. As to quaternary structure, tetramer of two alpha and two beta subunits. Mg(2+) serves as cofactor.

Its subcellular location is the cytoplasm. It carries out the reaction tRNA(Phe) + L-phenylalanine + ATP = L-phenylalanyl-tRNA(Phe) + AMP + diphosphate + H(+). This Chlorobium phaeobacteroides (strain DSM 266 / SMG 266 / 2430) protein is Phenylalanine--tRNA ligase alpha subunit.